The following is a 196-amino-acid chain: MNIVIIDTNCSNLLSVKTMLHRLGHNPIISDRADVISQADKLFLPGVGTASSAMKQLKKKNLITLIQNCTKPILGICLGMQLFGSISSENNGVNTLNIIHTPVKRMQYHGFPLPHMGWNTITIPKKHFLFYGIKENDYFYFAHSYCIKVCSVTISQTNYGQLFSSVIKYKNFFGVQFHPEKSGMPGQQLVKNFLEI.

One can recognise a Glutamine amidotransferase type-1 domain in the interval Asn2 to Ile196. Cys77 (nucleophile) is an active-site residue. Active-site residues include His178 and Glu180.

As to quaternary structure, heterodimer of HisH and HisF.

Its subcellular location is the cytoplasm. The catalysed reaction is 5-[(5-phospho-1-deoxy-D-ribulos-1-ylimino)methylamino]-1-(5-phospho-beta-D-ribosyl)imidazole-4-carboxamide + L-glutamine = D-erythro-1-(imidazol-4-yl)glycerol 3-phosphate + 5-amino-1-(5-phospho-beta-D-ribosyl)imidazole-4-carboxamide + L-glutamate + H(+). The enzyme catalyses L-glutamine + H2O = L-glutamate + NH4(+). It functions in the pathway amino-acid biosynthesis; L-histidine biosynthesis; L-histidine from 5-phospho-alpha-D-ribose 1-diphosphate: step 5/9. Functionally, IGPS catalyzes the conversion of PRFAR and glutamine to IGP, AICAR and glutamate. The HisH subunit catalyzes the hydrolysis of glutamine to glutamate and ammonia as part of the synthesis of IGP and AICAR. The resulting ammonia molecule is channeled to the active site of HisF. The polypeptide is Imidazole glycerol phosphate synthase subunit HisH (Blochmanniella pennsylvanica (strain BPEN)).